Reading from the N-terminus, the 188-residue chain is Cell division protein SepF (188 aa).

It belongs to the SepF family. Homodimer. Interacts with FtsZ.

Its subcellular location is the cytoplasm. Functionally, cell division protein that is part of the divisome complex and is recruited early to the Z-ring. Probably stimulates Z-ring formation, perhaps through the cross-linking of FtsZ protofilaments. Its function overlaps with FtsA. The chain is Cell division protein SepF from Synechococcus sp. (strain CC9605).